Reading from the N-terminus, the 487-residue chain is Glutamyl-tRNA(Gln) amidotransferase subunit A (487 aa).

Catalysis depends on charge relay system residues Lys-74 and Ser-149. Ser-173 serves as the catalytic Acyl-ester intermediate.

The protein belongs to the amidase family. GatA subfamily. As to quaternary structure, heterotrimer of A, B and C subunits.

The enzyme catalyses L-glutamyl-tRNA(Gln) + L-glutamine + ATP + H2O = L-glutaminyl-tRNA(Gln) + L-glutamate + ADP + phosphate + H(+). In terms of biological role, allows the formation of correctly charged Gln-tRNA(Gln) through the transamidation of misacylated Glu-tRNA(Gln) in organisms which lack glutaminyl-tRNA synthetase. The reaction takes place in the presence of glutamine and ATP through an activated gamma-phospho-Glu-tRNA(Gln). The protein is Glutamyl-tRNA(Gln) amidotransferase subunit A of Prochlorococcus marinus (strain MIT 9211).